The primary structure comprises 37 residues: Large ribosomal subunit protein bL36 (37 aa).

The protein belongs to the bacterial ribosomal protein bL36 family.

In Shewanella woodyi (strain ATCC 51908 / MS32), this protein is Large ribosomal subunit protein bL36.